Here is a 470-residue protein sequence, read N- to C-terminus: uncharacterized protein (470 aa).

The 337-residue stretch at 1 to 337 folds into the SPX domain; the sequence is MKFGHDFKRA…SLTAQPLFFQ (337 aa). Residues 118–145 are disordered; that stretch reads ASNVPSTPSDSTQQPPTNTLPSVSASSQ. A compositionally biased stretch (low complexity) spans 122-136; the sequence is PSTPSDSTQQPPTNT. The RING-type zinc-finger motif lies at 374-413; the sequence is CAICSNVAYKPVRLGCSHVFCLHCLIILQKQKVDFCPLCR.

It localises to the cytoplasm. This is an uncharacterized protein from Schizosaccharomyces pombe (strain 972 / ATCC 24843) (Fission yeast).